A 155-amino-acid chain; its full sequence is Cyanate hydratase (155 aa).

Active-site residues include Arg92, Glu95, and Ser118.

This sequence belongs to the cyanase family.

The catalysed reaction is cyanate + hydrogencarbonate + 3 H(+) = NH4(+) + 2 CO2. In terms of biological role, catalyzes the reaction of cyanate with bicarbonate to produce ammonia and carbon dioxide. In Mycobacterium avium (strain 104), this protein is Cyanate hydratase.